A 285-amino-acid chain; its full sequence is Bifunctional protein FolD (285 aa).

NADP(+) contacts are provided by residues 165–167 (GRS), S190, and I231.

This sequence belongs to the tetrahydrofolate dehydrogenase/cyclohydrolase family. In terms of assembly, homodimer.

It carries out the reaction (6R)-5,10-methylene-5,6,7,8-tetrahydrofolate + NADP(+) = (6R)-5,10-methenyltetrahydrofolate + NADPH. The catalysed reaction is (6R)-5,10-methenyltetrahydrofolate + H2O = (6R)-10-formyltetrahydrofolate + H(+). It participates in one-carbon metabolism; tetrahydrofolate interconversion. Its function is as follows. Catalyzes the oxidation of 5,10-methylenetetrahydrofolate to 5,10-methenyltetrahydrofolate and then the hydrolysis of 5,10-methenyltetrahydrofolate to 10-formyltetrahydrofolate. This chain is Bifunctional protein FolD, found in Verminephrobacter eiseniae (strain EF01-2).